The chain runs to 186 residues: Casparian strip membrane protein 3 (186 aa).

Residues 1-26 (MTKSTYVELGEEKTSNQKGNMKRGVS) lie on the Cytoplasmic side of the membrane. Residues 27–47 (ILDFILRLIAIVATLASAIAM) traverse the membrane as a helical segment. The Extracellular segment spans residues 48-74 (GTTDESLPFFTQFVRFRANYDDLPTLR). A helical transmembrane segment spans residues 75 to 95 (FFVVASAIVSGYLILSLPLSI). Over 96-107 (LHIIRSSAGMTR) the chain is Cytoplasmic. Residues 108-128 (VIFIILDTVMLGLLTAGSSAA) traverse the membrane as a helical segment. Residues 129–161 (ASIVYLAHKGNRKANWFAFCQQYNSFCERISGS) lie on the Extracellular side of the membrane. A helical transmembrane segment spans residues 162 to 182 (LIGSFIAIPLFIMLILLSALV). Over 183-186 (LSRR) the chain is Cytoplasmic.

Belongs to the Casparian strip membrane proteins (CASP) family. In terms of assembly, homodimer and heterodimers.

Its subcellular location is the cell membrane. Functionally, regulates membrane-cell wall junctions and localized cell wall deposition. Required for establishment of the Casparian strip membrane domain (CSD) and the subsequent formation of Casparian strips, a cell wall modification of the root endodermis that determines an apoplastic barrier between the intraorganismal apoplasm and the extraorganismal apoplasm and prevents lateral diffusion. The polypeptide is Casparian strip membrane protein 3 (Medicago truncatula (Barrel medic)).